A 129-amino-acid polypeptide reads, in one-letter code: uncharacterized protein (129 aa).

2 disordered regions span residues 1 to 57 (MGGG…LPNH) and 87 to 129 (PVSS…WLWW). The span at 10 to 20 (SGEERREKRSG) shows a compositional bias: basic and acidic residues. The segment covering 87–99 (PVSSSPSRSPSSS) has biased composition (low complexity).

This is an uncharacterized protein from Homo sapiens (Human).